The following is a 487-amino-acid chain: Protein nucleotidyltransferase YdiU (487 aa).

Residues Gly-90, Gly-92, Arg-93, Lys-113, Asp-125, Gly-126, Arg-176, and Arg-183 each contribute to the ATP site. Asp-252 functions as the Proton acceptor in the catalytic mechanism. Asn-253 and Asp-262 together coordinate Mg(2+). Asp-262 provides a ligand contact to ATP.

The protein belongs to the SELO family. Requires Mg(2+) as cofactor. It depends on Mn(2+) as a cofactor.

It catalyses the reaction L-seryl-[protein] + ATP = 3-O-(5'-adenylyl)-L-seryl-[protein] + diphosphate. The enzyme catalyses L-threonyl-[protein] + ATP = 3-O-(5'-adenylyl)-L-threonyl-[protein] + diphosphate. It carries out the reaction L-tyrosyl-[protein] + ATP = O-(5'-adenylyl)-L-tyrosyl-[protein] + diphosphate. The catalysed reaction is L-histidyl-[protein] + UTP = N(tele)-(5'-uridylyl)-L-histidyl-[protein] + diphosphate. It catalyses the reaction L-seryl-[protein] + UTP = O-(5'-uridylyl)-L-seryl-[protein] + diphosphate. The enzyme catalyses L-tyrosyl-[protein] + UTP = O-(5'-uridylyl)-L-tyrosyl-[protein] + diphosphate. In terms of biological role, nucleotidyltransferase involved in the post-translational modification of proteins. It can catalyze the addition of adenosine monophosphate (AMP) or uridine monophosphate (UMP) to a protein, resulting in modifications known as AMPylation and UMPylation. This Azotobacter vinelandii (strain DJ / ATCC BAA-1303) protein is Protein nucleotidyltransferase YdiU.